We begin with the raw amino-acid sequence, 867 residues long: Cadherin-related family member 1 (867 aa).

The N-terminal stretch at Met-1–Ser-21 is a signal peptide. Residues Val-22–Gly-707 are Extracellular-facing. Cadherin domains follow at residues Asn-39–Phe-138, Leu-139–Phe-250, Val-251–Phe-357, Pro-363–Phe-476, Ser-477–Phe-580, and Asp-572–Ala-692. Residues Val-708 to Phe-728 form a helical membrane-spanning segment. The Cytoplasmic segment spans residues Trp-729–Tyr-867. The disordered stretch occupies residues Glu-777–Gly-825. Residues Pro-795–Leu-809 show a composition bias toward pro residues.

In terms of tissue distribution, expressed in photoreceptor cells of the outer nuclear layer of the retina and in the pinal gland.

It is found in the membrane. In terms of biological role, potential calcium-dependent cell-adhesion protein. The protein is Cadherin-related family member 1 (cdhr1) of Xenopus laevis (African clawed frog).